A 505-amino-acid polypeptide reads, in one-letter code: Aspartyl/glutamyl-tRNA(Asn/Gln) amidotransferase subunit B (505 aa).

The protein belongs to the GatB/GatE family. GatB subfamily. As to quaternary structure, heterotrimer of A, B and C subunits.

It carries out the reaction L-glutamyl-tRNA(Gln) + L-glutamine + ATP + H2O = L-glutaminyl-tRNA(Gln) + L-glutamate + ADP + phosphate + H(+). The catalysed reaction is L-aspartyl-tRNA(Asn) + L-glutamine + ATP + H2O = L-asparaginyl-tRNA(Asn) + L-glutamate + ADP + phosphate + 2 H(+). In terms of biological role, allows the formation of correctly charged Asn-tRNA(Asn) or Gln-tRNA(Gln) through the transamidation of misacylated Asp-tRNA(Asn) or Glu-tRNA(Gln) in organisms which lack either or both of asparaginyl-tRNA or glutaminyl-tRNA synthetases. The reaction takes place in the presence of glutamine and ATP through an activated phospho-Asp-tRNA(Asn) or phospho-Glu-tRNA(Gln). The protein is Aspartyl/glutamyl-tRNA(Asn/Gln) amidotransferase subunit B of Streptomyces avermitilis (strain ATCC 31267 / DSM 46492 / JCM 5070 / NBRC 14893 / NCIMB 12804 / NRRL 8165 / MA-4680).